The following is a 242-amino-acid chain: Probable transcriptional regulatory protein EUBREC_1961 (242 aa).

Belongs to the TACO1 family.

It is found in the cytoplasm. This Agathobacter rectalis (strain ATCC 33656 / DSM 3377 / JCM 17463 / KCTC 5835 / VPI 0990) (Eubacterium rectale) protein is Probable transcriptional regulatory protein EUBREC_1961.